The chain runs to 173 residues: Crossover junction endodeoxyribonuclease RuvC (173 aa).

Active-site residues include Asp8, Glu67, and Asp139. Asp8, Glu67, and Asp139 together coordinate Mg(2+).

It belongs to the RuvC family. As to quaternary structure, homodimer which binds Holliday junction (HJ) DNA. The HJ becomes 2-fold symmetrical on binding to RuvC with unstacked arms; it has a different conformation from HJ DNA in complex with RuvA. In the full resolvosome a probable DNA-RuvA(4)-RuvB(12)-RuvC(2) complex forms which resolves the HJ. It depends on Mg(2+) as a cofactor.

The protein resides in the cytoplasm. The enzyme catalyses Endonucleolytic cleavage at a junction such as a reciprocal single-stranded crossover between two homologous DNA duplexes (Holliday junction).. In terms of biological role, the RuvA-RuvB-RuvC complex processes Holliday junction (HJ) DNA during genetic recombination and DNA repair. Endonuclease that resolves HJ intermediates. Cleaves cruciform DNA by making single-stranded nicks across the HJ at symmetrical positions within the homologous arms, yielding a 5'-phosphate and a 3'-hydroxyl group; requires a central core of homology in the junction. The consensus cleavage sequence is 5'-(A/T)TT(C/G)-3'. Cleavage occurs on the 3'-side of the TT dinucleotide at the point of strand exchange. HJ branch migration catalyzed by RuvA-RuvB allows RuvC to scan DNA until it finds its consensus sequence, where it cleaves and resolves the cruciform DNA. In Vibrio atlanticus (strain LGP32) (Vibrio splendidus (strain Mel32)), this protein is Crossover junction endodeoxyribonuclease RuvC.